The chain runs to 1009 residues: MSADPINDQSSLCVRCNKSIASSQVYELESKKWHDQCFTCYKCDKKLNADSDFLVLDIGTLICYDCSDKCTNCGDKIDDTAIILPSSNEAYCSNCFRCCRCSNRIKNLKYAKTKRGLCCMDCHEKLLRKKQLLLENQTKNSSKEDFPIKLPERSVKRPLSPTRINGKSDVSTNNTAISKNLVSSNEDQQLTPQVLVSQERDESSLNDNNDNDNSKDREETSSHARTVSIDDILNSTLEHDSNSIEEQSLVDNEDYINKMGEDVTYRLLKPQRANRDSIVVKDPRIPNSNSNANRFFSIYDKEETDKDDTDNKENEIIVNTPRNSTDKITSPLNSPMAVQMNEEVEPPHGLALTLSEATKENNKSSQGIQTSTSKSMNHVSPITRTDTVEMKTSTSSSTLRLSDNGSFSRPQTADNLLPHKKVAPSPNKKLSRSFSLKSKNFVHNLKSKTSEMLDPKHPHHSTSIQESDTHSGWGVSSTHTNIRKSKAKKNPVSRGQSDSTIYNTLPQHGNFTVPEFNHKKAQSSLGSISKKQNSNDTATNRRINGSFTSSSSGHHIAMFRTPPLESGPLFKRPSLSSESAHHRSSSLQTSRSTNALLEDDSTKVDATDESATSLEKDFYFTELTLRKLKLDVRELEGTKKKLLQDVENLRLAKERLLNDVDNLTREKDKQSASSRESLEQKENIATSITVKSPSSNSDRKGSISNASPKPRFWKIFSSAKDHQVGDLESQQRSPNSSSGGTTNIAQKEISSPKLIRVHDELPSPGKVPLSPSPKRLDYTPDGSHLYGSSLQARCAYEKSTVPIIIRCCIDRIEKDDIGLNMEGLYRKSGSQTLVEEIENEFAQNNSLHSDTLSPKLNALLNQDIHAVASVLKRYLRKLPDPVLSFSIYDALIDLVRNNQLIERLPLNNDKFLDSPQKVTIYEMVLKSLLEIFKILPVEHQEVLKVLAAHIGKVRRCSERNLMNLHNLSLVFAPSLIHDFDGEKDIVDMKERNYIVEFILGNYRDIFKQA.

LIM zinc-binding domains lie at 11–68 and 69–129; these read SLCV…DCSD and KCTN…LLRK. Residues 143 to 155 are compositionally biased toward basic and acidic residues; it reads KEDFPIKLPERSV. Disordered stretches follow at residues 143 to 228, 358 to 433, 449 to 608, 664 to 709, and 723 to 780; these read KEDF…RTVS, TKEN…LSRS, TSEM…DATD, TREK…ASPK, and QVGD…DYTP. Over residues 162–196 the composition is skewed to polar residues; that stretch reads TRINGKSDVSTNNTAISKNLVSSNEDQQLTPQVLV. Residues 212–222 show a composition bias toward basic and acidic residues; that stretch reads DNSKDREETSS. Polar residues-rich tracts occupy residues 363 to 385 and 399 to 414; these read KSSQ…ITRT and LRLS…QTAD. The segment covering 481–491 has biased composition (basic residues); it reads NIRKSKAKKNP. 2 stretches are compositionally biased toward polar residues: residues 493-510 and 522-553; these read SRGQ…QHGN and QSSL…SSSG. The segment covering 664-682 has biased composition (basic and acidic residues); that stretch reads TREKDKQSASSRESLEQKE. Polar residues-rich tracts occupy residues 683 to 707 and 728 to 749; these read NIAT…SNAS and ESQQ…QKEI. Phosphoserine is present on S763. The region spanning 788–1006 is the Rho-GAP domain; sequence SSLQARCAYE…FILGNYRDIF (219 aa).

Its function is as follows. GTPase-activating protein (GAP) for CDC42 and/or RHO1. This is Rho-type GTPase-activating protein 2 (RGA2) from Saccharomyces cerevisiae (strain ATCC 204508 / S288c) (Baker's yeast).